A 764-amino-acid chain; its full sequence is Complement factor B (764 aa).

The N-terminal stretch at 1–25 (MGSNLSPQLCLMPFILGLLSGGVTT) is a signal peptide. Sushi domains are found at residues 35–100 (GSCS…ECRA), 101–160 (IHCP…ICDN), and 163–220 (GYCS…SCQD). 6 cysteine pairs are disulfide-bonded: Cys37/Cys76, Cys62/Cys98, Cys103/Cys145, Cys131/Cys158, Cys165/Cys205, and Cys191/Cys218. N-linked (GlcNAc...) asparagine glycans are attached at residues Asn122 and Asn142. Positions 270–469 (NIYLVLDGSD…NLEDVFYQMI (200 aa)) constitute a VWFA domain. 2 residues coordinate Mg(2+): Ser278 and Ser280. Positions 278 and 280 each coordinate Mn(2+). Asn285 is a glycosylation site (N-linked (GlcNAc...) asparagine). N-linked (Glc) (glycation) lysine glycosylation is present at Lys291. Residue Thr353 coordinates Mg(2+). Mn(2+) is bound at residue Thr353. The N-linked (GlcNAc...) asparagine glycan is linked to Asn378. The region spanning 477–757 (LCGMVWEHRK…VLPWLKEKLQ (281 aa)) is the Peptidase S1 domain. Cystine bridges form between Cys478–Cys596, Cys511–Cys527, Cys599–Cys615, Cys656–Cys682, and Cys695–Cys725. Catalysis depends on charge relay system residues His526 and Asp576. Residue Ser699 is the Charge relay system of the active site.

It belongs to the peptidase S1 family. In terms of assembly, monomer. Interacts with complement C3b; this interaction is dependent on the presence of Mg(2+). As to quaternary structure, catalytic component of the C3 convertase of the alternative complement pathway, also named C3bBb, composed of complement factor B Bb and complement C3b. Catalytic component of the C5 convertase of the alternative complement pathway, also named C3bBb3b, composed of complement factor B Bb and additional molecules of complement C3b. Interacts to CFP; this interaction contributes to the stabilization of the active C3-convertase enzyme complex. The cofactor is Mg(2+). It depends on Mn(2+) as a cofactor. In terms of processing, cleaved by CFD following activation of the alternative complement system, generating Ba and Bb chains. Cleavage and activation takes place when CFB is already associated with complement C3b.

It localises to the secreted. It is found in the cell surface. It carries out the reaction Cleavage of Arg-|-Ser bond in complement component C3 alpha-chain to yield C3a and C3b, and Arg-|-Xaa bond in complement component C5 alpha-chain to yield C5a and C5b.. Functionally, precursor of the catalytic component of the C3 and C5 convertase complexes of the alternative pathway of the complement system, a cascade of proteins that leads to phagocytosis and breakdown of pathogens and signaling that strengthens the adaptive immune system. The alternative complement pathway acts as an amplification loop that enhances other complement pathways (classical, lectin and GZMK) by promoting formation of additional C3 and C5 convertases. CFB is cleaved and activated by CFD to generate Ba and Bb chains; Bb chain constituting the catalytic component of the C3 and C5 convertases. In terms of biological role, serine protease component of the complement C3 and C5 convertase complexes of the alternative complement pathway. Following cleavage and activation by factor D (CFD), forms the C3 convertase together with complement C3b. As part of the C3 convertase, cleaves and activates C3 into C3a anaphylatoxin and C3b opsonin, the next components of the complement pathways. When an additional complement C3b molecule binds to the C3 convertase, forms the C5 convertase, which cleaves and activates C5 into C5a anaphylatoxin and C5b component of the membrane attack complex. Involved in proliferation and differentiation of preactivated B-lymphocytes, rapid spreading of peripheral blood monocytes, stimulation of lymphocyte blastogenesis and lysis of erythrocytes. This Homo sapiens (Human) protein is Complement factor B.